We begin with the raw amino-acid sequence, 102 residues long: Small ribosomal subunit protein uS10 (102 aa).

It belongs to the universal ribosomal protein uS10 family. Part of the 30S ribosomal subunit.

In terms of biological role, involved in the binding of tRNA to the ribosomes. The protein is Small ribosomal subunit protein uS10 of Desulfitobacterium hafniense (strain DSM 10664 / DCB-2).